The sequence spans 316 residues: Pantothenate kinase (316 aa).

99–106 is a binding site for ATP; that stretch reads GSVAVGKS.

It belongs to the prokaryotic pantothenate kinase family.

The protein resides in the cytoplasm. It carries out the reaction (R)-pantothenate + ATP = (R)-4'-phosphopantothenate + ADP + H(+). It participates in cofactor biosynthesis; coenzyme A biosynthesis; CoA from (R)-pantothenate: step 1/5. The protein is Pantothenate kinase (coaA) of Pasteurella multocida (strain Pm70).